An 88-amino-acid chain; its full sequence is Large ribosomal subunit protein eL37 (88 aa).

Positions 19, 22, 34, and 37 each coordinate Zn(2+). The segment at Cys19 to Cys37 adopts a C4-type zinc-finger fold.

It belongs to the eukaryotic ribosomal protein eL37 family. It depends on Zn(2+) as a cofactor.

Binds to the 23S rRNA. This Debaryomyces hansenii (strain ATCC 36239 / CBS 767 / BCRC 21394 / JCM 1990 / NBRC 0083 / IGC 2968) (Yeast) protein is Large ribosomal subunit protein eL37 (RPL37).